The following is a 605-amino-acid chain: Elongation factor 4 (605 aa).

A tr-type G domain is found at 11–193 (EKIRNFSIIA…QIVEKVPAPT (183 aa)). Residues 23–28 (DHGKST) and 140–143 (NKID) contribute to the GTP site.

This sequence belongs to the TRAFAC class translation factor GTPase superfamily. Classic translation factor GTPase family. LepA subfamily.

It is found in the cell membrane. It carries out the reaction GTP + H2O = GDP + phosphate + H(+). Required for accurate and efficient protein synthesis under certain stress conditions. May act as a fidelity factor of the translation reaction, by catalyzing a one-codon backward translocation of tRNAs on improperly translocated ribosomes. Back-translocation proceeds from a post-translocation (POST) complex to a pre-translocation (PRE) complex, thus giving elongation factor G a second chance to translocate the tRNAs correctly. Binds to ribosomes in a GTP-dependent manner. This is Elongation factor 4 from Streptococcus pyogenes serotype M4 (strain MGAS10750).